A 431-amino-acid polypeptide reads, in one-letter code: Enolase (431 aa).

Q163 is a binding site for (2R)-2-phosphoglycerate. E205 acts as the Proton donor in catalysis. Residues D242, E288, and D315 each coordinate Mg(2+). (2R)-2-phosphoglycerate is bound by residues K340, R369, S370, and K391. K340 acts as the Proton acceptor in catalysis.

This sequence belongs to the enolase family. The cofactor is Mg(2+).

The protein resides in the cytoplasm. It is found in the secreted. It localises to the cell surface. The enzyme catalyses (2R)-2-phosphoglycerate = phosphoenolpyruvate + H2O. It functions in the pathway carbohydrate degradation; glycolysis; pyruvate from D-glyceraldehyde 3-phosphate: step 4/5. Catalyzes the reversible conversion of 2-phosphoglycerate (2-PG) into phosphoenolpyruvate (PEP). It is essential for the degradation of carbohydrates via glycolysis. The polypeptide is Enolase (Bacillus cereus (strain B4264)).